Here is a 194-residue protein sequence, read N- to C-terminus: ATP-dependent Clp protease proteolytic subunit (194 aa).

Residue Ser-97 is the Nucleophile of the active site. His-122 is a catalytic residue.

This sequence belongs to the peptidase S14 family. In terms of assembly, fourteen ClpP subunits assemble into 2 heptameric rings which stack back to back to give a disk-like structure with a central cavity, resembling the structure of eukaryotic proteasomes.

It localises to the cytoplasm. It catalyses the reaction Hydrolysis of proteins to small peptides in the presence of ATP and magnesium. alpha-casein is the usual test substrate. In the absence of ATP, only oligopeptides shorter than five residues are hydrolyzed (such as succinyl-Leu-Tyr-|-NHMec, and Leu-Tyr-Leu-|-Tyr-Trp, in which cleavage of the -Tyr-|-Leu- and -Tyr-|-Trp bonds also occurs).. Its function is as follows. Cleaves peptides in various proteins in a process that requires ATP hydrolysis. Has a chymotrypsin-like activity. Plays a major role in the degradation of misfolded proteins. This Carsonella ruddii (strain PV) protein is ATP-dependent Clp protease proteolytic subunit.